Consider the following 2210-residue polypeptide: RNA-directed RNA polymerase L (2210 aa).

An endonuclease region spans residues 26-285 (KAIFLSQTKL…KCAIMSEEDS (260 aa)). The Mn(2+) site is built by glutamate 51, aspartate 88, and glutamate 101. Residue lysine 114 is part of the active site. The 197-residue stretch at 1163 to 1359 (LDMKSVVRQG…FLSDKLNKFV (197 aa)) folds into the RdRp catalytic domain. A Mg(2+)-binding site is contributed by aspartate 1319.

The protein belongs to the Bunyavirales RNA polymerase family. In terms of assembly, homomultimer; the oligomeric structure is essential for the polymerase activity. Interacts with nucleoprotein N. Interacts with protein Z; this interaction inhibits viral transcription and replication, Z partially blocks the product exit tunnel for the releasing nascent RNA product. It depends on Mn(2+) as a cofactor. Mg(2+) serves as cofactor.

It localises to the virion. The protein resides in the host cytoplasm. It carries out the reaction RNA(n) + a ribonucleoside 5'-triphosphate = RNA(n+1) + diphosphate. RNA-dependent RNA polymerase, which is responsible for the replication and transcription of the viral RNA genome using antigenomic RNA as an intermediate. During transcription, synthesizes subgenomic RNAs and assures their capping by a cap-snatching mechanism, which involves the endonuclease activity cleaving the host capped pre-mRNAs. These short capped RNAs are then used as primers for viral transcription. The 3'-end of subgenomic mRNAs molecules are heterogeneous and not polyadenylated. The replicase function is to direct synthesis of antigenomic and genomic RNA which are encapsidated and non capped. As a consequence of the use of the same enzyme for both transcription and replication, these mechanisms need to be well coordinated. These processes may be regulated by proteins N and Z in a dose-dependent manner. Z protein inhibits the viral polymerase L und thus the viral transcription and RNA synthesis. This chain is RNA-directed RNA polymerase L, found in Sigmodon alstoni (PIRV).